We begin with the raw amino-acid sequence, 206 residues long: Pyridoxine/pyridoxamine 5'-phosphate oxidase (206 aa).

Residues 53 to 58 (RMVLLK), 68 to 69 (YT), Lys75, and Gln97 contribute to the FMN site. Position 58 (Lys58) interacts with substrate. Substrate-binding residues include Tyr115, Arg119, and Ser123. FMN is bound by residues 132-133 (QS) and Trp177. A substrate-binding site is contributed by 183-185 (RLH). An FMN-binding site is contributed by Arg187.

Belongs to the pyridoxamine 5'-phosphate oxidase family. Homodimer. FMN is required as a cofactor.

The catalysed reaction is pyridoxamine 5'-phosphate + O2 + H2O = pyridoxal 5'-phosphate + H2O2 + NH4(+). The enzyme catalyses pyridoxine 5'-phosphate + O2 = pyridoxal 5'-phosphate + H2O2. It participates in cofactor metabolism; pyridoxal 5'-phosphate salvage; pyridoxal 5'-phosphate from pyridoxamine 5'-phosphate: step 1/1. It functions in the pathway cofactor metabolism; pyridoxal 5'-phosphate salvage; pyridoxal 5'-phosphate from pyridoxine 5'-phosphate: step 1/1. Functionally, catalyzes the oxidation of either pyridoxine 5'-phosphate (PNP) or pyridoxamine 5'-phosphate (PMP) into pyridoxal 5'-phosphate (PLP). In Agrobacterium fabrum (strain C58 / ATCC 33970) (Agrobacterium tumefaciens (strain C58)), this protein is Pyridoxine/pyridoxamine 5'-phosphate oxidase.